Consider the following 399-residue polypeptide: Exodeoxyribonuclease 7 large subunit (399 aa).

The protein belongs to the XseA family. In terms of assembly, heterooligomer composed of large and small subunits.

It localises to the cytoplasm. It carries out the reaction Exonucleolytic cleavage in either 5'- to 3'- or 3'- to 5'-direction to yield nucleoside 5'-phosphates.. Its function is as follows. Bidirectionally degrades single-stranded DNA into large acid-insoluble oligonucleotides, which are then degraded further into small acid-soluble oligonucleotides. This is Exodeoxyribonuclease 7 large subunit from Clostridium acetobutylicum (strain ATCC 824 / DSM 792 / JCM 1419 / IAM 19013 / LMG 5710 / NBRC 13948 / NRRL B-527 / VKM B-1787 / 2291 / W).